Reading from the N-terminus, the 217-residue chain is UPF0319 protein HS_1349 (217 aa).

The first 21 residues, 1-21 (MKFSFAALASAMLLTSTAAFA), serve as a signal peptide directing secretion.

Belongs to the UPF0319 family.

This Histophilus somni (strain 129Pt) (Haemophilus somnus) protein is UPF0319 protein HS_1349.